Consider the following 141-residue polypeptide: Large ribosomal subunit protein uL11 (141 aa).

This sequence belongs to the universal ribosomal protein uL11 family. As to quaternary structure, part of the ribosomal stalk of the 50S ribosomal subunit. Interacts with L10 and the large rRNA to form the base of the stalk. L10 forms an elongated spine to which L12 dimers bind in a sequential fashion forming a multimeric L10(L12)X complex. Post-translationally, one or more lysine residues are methylated.

In terms of biological role, forms part of the ribosomal stalk which helps the ribosome interact with GTP-bound translation factors. The chain is Large ribosomal subunit protein uL11 from Gloeothece citriformis (strain PCC 7424) (Cyanothece sp. (strain PCC 7424)).